An 81-amino-acid polypeptide reads, in one-letter code: Small serum protein 4 (81 aa).

The N-terminal stretch at 1-19 is a signal peptide; it reads MKVFFILIIFSFTLATCQG. 3 cysteine pairs are disulfide-bonded: cysteine 21–cysteine 74, cysteine 41–cysteine 66, and cysteine 64–cysteine 73.

Belongs to the beta-microseminoprotein family.

The protein localises to the secreted. Functionally, shows an slight inhibitory effect toward the metalloproteinase brevilysin H6, but does not inhibit the metalloproteinases thermolysin, HR1A and HR1B. In Protobothrops flavoviridis (Habu), this protein is Small serum protein 4.